We begin with the raw amino-acid sequence, 298 residues long: Possible hemolysin C (298 aa).

CBS domains lie at 80-141 (MVPR…QNGC) and 145-202 (LIRK…IDDE).

Belongs to the UPF0053 family. Hemolysin C subfamily.

This is Possible hemolysin C (tlyC) from Rickettsia canadensis (strain McKiel).